The primary structure comprises 1438 residues: DNA-directed RNA polymerase subunit beta' (1438 aa).

Residues Cys70, Cys72, Cys85, and Cys88 each contribute to the Zn(2+) site. Mg(2+) is bound by residues Asp461, Asp463, and Asp465. The Zn(2+) site is built by Cys821, Cys895, Cys902, and Cys905. A compositionally biased stretch (low complexity) spans 1413–1427 (DAMAAAMGGDSAGGD). A disordered region spans residues 1413–1438 (DAMAAAMGGDSAGGDTKPEAPEASEE).

Belongs to the RNA polymerase beta' chain family. In terms of assembly, the RNAP catalytic core consists of 2 alpha, 1 beta, 1 beta' and 1 omega subunit. When a sigma factor is associated with the core the holoenzyme is formed, which can initiate transcription. Mg(2+) is required as a cofactor. The cofactor is Zn(2+).

It catalyses the reaction RNA(n) + a ribonucleoside 5'-triphosphate = RNA(n+1) + diphosphate. In terms of biological role, DNA-dependent RNA polymerase catalyzes the transcription of DNA into RNA using the four ribonucleoside triphosphates as substrates. The polypeptide is DNA-directed RNA polymerase subunit beta' (Erythrobacter litoralis (strain HTCC2594)).